The following is a 145-amino-acid chain: 3-dehydroquinate dehydratase (145 aa).

The active-site Proton acceptor is Y24. The substrate site is built by N75, H81, and D88. H101 (proton donor) is an active-site residue. Substrate-binding positions include 102-103 (IS) and R112.

The protein belongs to the type-II 3-dehydroquinase family. As to quaternary structure, homododecamer.

The enzyme catalyses 3-dehydroquinate = 3-dehydroshikimate + H2O. Its pathway is metabolic intermediate biosynthesis; chorismate biosynthesis; chorismate from D-erythrose 4-phosphate and phosphoenolpyruvate: step 3/7. In terms of biological role, catalyzes a trans-dehydration via an enolate intermediate. This Rhizobium etli (strain CIAT 652) protein is 3-dehydroquinate dehydratase.